The primary structure comprises 356 residues: sn-glycerol-3-phosphate import ATP-binding protein UgpC (356 aa).

An ABC transporter domain is found at 4–235; sequence LKLQAVTKSW…PASLFVASFI (232 aa). 37-44 serves as a coordination point for ATP; sequence GPSGCGKS.

The protein belongs to the ABC transporter superfamily. sn-glycerol-3-phosphate importer (TC 3.A.1.1.3) family. The complex is composed of two ATP-binding proteins (UgpC), two transmembrane proteins (UgpA and UgpE) and a solute-binding protein (UgpB).

Its subcellular location is the cell inner membrane. It carries out the reaction sn-glycerol 3-phosphate(out) + ATP + H2O = sn-glycerol 3-phosphate(in) + ADP + phosphate + H(+). Functionally, part of the ABC transporter complex UgpBAEC involved in sn-glycerol-3-phosphate (G3P) import. Responsible for energy coupling to the transport system. In Escherichia coli O157:H7, this protein is sn-glycerol-3-phosphate import ATP-binding protein UgpC.